Consider the following 131-residue polypeptide: Large ribosomal subunit protein eL32 (131 aa).

This sequence belongs to the eukaryotic ribosomal protein eL32 family. Component of the large ribosomal subunit (LSU). Mature N.crassa ribosomes consist of a small (40S) and a large (60S) subunit. The 40S small subunit contains 1 molecule of ribosomal RNA (18S rRNA) and at least 32 different proteins. The large 60S subunit contains 3 rRNA molecules (26S, 5.8S and 5S rRNA) and at least 42 different proteins.

It localises to the cytoplasm. In terms of biological role, component of the ribosome, a large ribonucleoprotein complex responsible for the synthesis of proteins in the cell. The small ribosomal subunit (SSU) binds messenger RNAs (mRNAs) and translates the encoded message by selecting cognate aminoacyl-transfer RNA (tRNA) molecules. The large subunit (LSU) contains the ribosomal catalytic site termed the peptidyl transferase center (PTC), which catalyzes the formation of peptide bonds, thereby polymerizing the amino acids delivered by tRNAs into a polypeptide chain. The nascent polypeptides leave the ribosome through a tunnel in the LSU and interact with protein factors that function in enzymatic processing, targeting, and the membrane insertion of nascent chains at the exit of the ribosomal tunnel. In Neurospora crassa (strain ATCC 24698 / 74-OR23-1A / CBS 708.71 / DSM 1257 / FGSC 987), this protein is Large ribosomal subunit protein eL32 (crp-63).